Here is a 554-residue protein sequence, read N- to C-terminus: MLO-like protein 14 (554 aa).

Residues 1 to 13 (MREETEPSERTLG) are Extracellular-facing. Residues 14-34 (LTPTWSVATVLTIFVFVSLIV) traverse the membrane as a helical segment. Over 35-63 (ERSIHRLSNWLQKTKRKPLFAALEKMKEE) the chain is Cytoplasmic. The chain crosses the membrane as a helical span at residues 64–84 (LMLLGFISLLLTATSSTIANI). Residues 85-158 (CVSSSFHNDR…SYEGMEQLHR (74 aa)) lie on the Extracellular side of the membrane. Residues 159 to 179 (FIFIMAVTHVTYSCLTMLLAI) traverse the membrane as a helical segment. At 180–281 (VKIHRWRIWE…MIRSMEEEFQ (102 aa)) the chain is on the cytoplasmic side. Residues 282–302 (KIVGVSGPLWGFVVGFMLFNI) traverse the membrane as a helical segment. Lys303 is a topological domain (extracellular). Residues 304–324 (GSNLYFWLAIIPITLVLLVGA) form a helical membrane-spanning segment. At 325 to 366 (KLQHVIATLALENASITEYASGIKLRPRDELFWFKKPELLLS) the chain is on the cytoplasmic side. A helical transmembrane segment spans residues 367-387 (LIHFIQFQNAFELASFFWFWW). The Extracellular portion of the chain corresponds to 388–406 (QFGYNSCFLRNHLLVYLRL). A helical transmembrane segment spans residues 407-427 (ILGFSGQFLCSYSTLPLYALV). Residues 428-554 (TQMGTNYKAA…SSSLPMRREC (127 aa)) are Cytoplasmic-facing. A calmodulin-binding region spans residues 441–462 (QRVRETINGWGKATRRKRRHGL).

This sequence belongs to the MLO family.

It localises to the membrane. Its function is as follows. May be involved in modulation of pathogen defense and leaf cell death. Activity seems to be regulated by Ca(2+)-dependent calmodulin binding and seems not to require heterotrimeric G proteins. This is MLO-like protein 14 (MLO14) from Arabidopsis thaliana (Mouse-ear cress).